A 226-amino-acid chain; its full sequence is UPF0173 metal-dependent hydrolase Tpet_1587 (226 aa).

This sequence belongs to the UPF0173 family.

The chain is UPF0173 metal-dependent hydrolase Tpet_1587 from Thermotoga petrophila (strain ATCC BAA-488 / DSM 13995 / JCM 10881 / RKU-1).